The following is a 381-amino-acid chain: Testis-specific expressed protein 55 (381 aa).

Disordered regions lie at residues 1–176 and 292–317; these read MDEP…SDPH and TTEY…QSSR. Basic and acidic residues-rich tracts occupy residues 8-24 and 65-103; these read SLNH…EKNN and RTSE…ERRT. A compositionally biased stretch (polar residues) spans 104 to 113; sequence SQPPNQQLPS. Positions 114–125 are enriched in basic and acidic residues; it reads HSERKTSGKIDG. The span at 134–143 shows a compositional bias: acidic residues; sequence TDQETSEFDD. Composition is skewed to polar residues over residues 147–163 and 292–302; these read SAST…QEYN and TTEYTSDTTPV. Positions 307–317 are enriched in low complexity; it reads RSSQRSSQSSR.

As to expression, testis-specific.

The protein resides in the nucleus. The sequence is that of Testis-specific expressed protein 55 from Mus musculus (Mouse).